A 182-amino-acid polypeptide reads, in one-letter code: Large ribosomal subunit protein uL6 (182 aa).

Belongs to the universal ribosomal protein uL6 family. In terms of assembly, part of the 50S ribosomal subunit.

This protein binds to the 23S rRNA, and is important in its secondary structure. It is located near the subunit interface in the base of the L7/L12 stalk, and near the tRNA binding site of the peptidyltransferase center. This chain is Large ribosomal subunit protein uL6, found in Methanocaldococcus jannaschii (strain ATCC 43067 / DSM 2661 / JAL-1 / JCM 10045 / NBRC 100440) (Methanococcus jannaschii).